Reading from the N-terminus, the 564-residue chain is Septation ring formation regulator EzrA (564 aa).

At 1-2 (ME) the chain is on the extracellular side. Residues 3–21 (FVIGLLALFLILFATGYLF) form a helical membrane-spanning segment. Residues 22–564 (RKNIYKEIDR…RLEADAKQPE (543 aa)) lie on the Cytoplasmic side of the membrane. 3 coiled-coil regions span residues 99–159 (QKSK…AYSH), 243–281 (KGYKLDHIQVEKELENLLKELKRAEDALLDELDLEEAAA), and 310–498 (KVPE…VELV).

The protein belongs to the EzrA family.

The protein resides in the cell membrane. Its function is as follows. Negative regulator of FtsZ ring formation; modulates the frequency and position of FtsZ ring formation. Inhibits FtsZ ring formation at polar sites. Interacts either with FtsZ or with one of its binding partners to promote depolymerization. This is Septation ring formation regulator EzrA from Bacillus licheniformis (strain ATCC 14580 / DSM 13 / JCM 2505 / CCUG 7422 / NBRC 12200 / NCIMB 9375 / NCTC 10341 / NRRL NRS-1264 / Gibson 46).